Consider the following 94-residue polypeptide: Protein RESPONSE TO LOW SULFUR 1 (94 aa).

Positions 8 to 35 (VTVAAEEMDELRRRNIELSREVAEMKTE) form a coiled coil.

This is Protein RESPONSE TO LOW SULFUR 1 from Arabidopsis thaliana (Mouse-ear cress).